The primary structure comprises 283 residues: ACT domain-containing protein DS12, chloroplastic (283 aa).

The transit peptide at 1 to 56 (MAEMAVTAALRPCSGVSPAVSGTSHRRRRPAAWRALAPPPPHAGLRLSSPAVRVPR) directs the protein to the chloroplast. The segment at 14-78 (SGVSPAVSGT…SNTDTVPTPK (65 aa)) is disordered. Residues 48-63 (SSPAVRVPRAASSAAV) show a composition bias toward low complexity. ACT domains follow at residues 91-171 (IVEI…ASSQ) and 206-276 (LLVV…LRRP).

The protein localises to the plastid. Its subcellular location is the chloroplast. The chain is ACT domain-containing protein DS12, chloroplastic from Oryza sativa subsp. indica (Rice).